Reading from the N-terminus, the 324-residue chain is uncharacterized protein (324 aa).

Helical transmembrane passes span 4–24 (GNKV…PEFM), 63–83 (AALL…EGIL), 106–128 (ALFY…ISFL), 132–151 (WQVQ…SHLL), 179–199 (LADI…AVTL), 209–229 (GLDG…LVIM), 246–266 (LETA…LYTL), and 282–302 (GTWK…GWFM).

The protein belongs to the TerC family.

The protein resides in the cell membrane. This is an uncharacterized protein from Bacillus subtilis (strain 168).